Here is a 301-residue protein sequence, read N- to C-terminus: Probable alpha-L-glutamate ligase 1 (301 aa).

The ATP-grasp domain maps to 104 to 287; it reads LQLLSRKGIG…VTEPIVEYIE (184 aa). Residues Lys141, 178–179, Asp187, and 211–213 each bind ATP; these read EY and RSN. The Mg(2+) site is built by Asp248, Glu260, and Asn262. Residues Asp248, Glu260, and Asn262 each contribute to the Mn(2+) site.

This sequence belongs to the RimK family. It depends on Mg(2+) as a cofactor. Requires Mn(2+) as cofactor.

In Shewanella sp. (strain MR-4), this protein is Probable alpha-L-glutamate ligase 1.